We begin with the raw amino-acid sequence, 102 residues long: Lipopolysaccharide assembly protein A (102 aa).

Over 1-2 (MK) the chain is Cytoplasmic. Residues 3 to 23 (YLLIFLLVLAIFVISVTLGAQ) traverse the membrane as a helical segment. At 24–43 (NDQQVTFNYLLAQGEYRIST) the chain is on the periplasmic side. Residues 44 to 64 (LLAVLFAAGFAIGWLICGLFW) form a helical membrane-spanning segment. Positions 64–92 (WLRVRVSLARAERKIKRLENQLSPATDVA) form a coiled coil. Over 65 to 102 (LRVRVSLARAERKIKRLENQLSPATDVAVVPHSSAAKE) the chain is Cytoplasmic.

Belongs to the LapA family.

Its subcellular location is the cell inner membrane. In terms of biological role, involved in the assembly of lipopolysaccharide (LPS). In Escherichia coli (strain K12), this protein is Lipopolysaccharide assembly protein A.